Reading from the N-terminus, the 271-residue chain is Formamidopyrimidine-DNA glycosylase (271 aa).

Pro-2 functions as the Schiff-base intermediate with DNA in the catalytic mechanism. The active-site Proton donor is the Glu-3. The active-site Proton donor; for beta-elimination activity is the Lys-57. Residues His-90, Arg-109, and Lys-151 each coordinate DNA. An FPG-type zinc finger spans residues 236 to 270 (HVYGRGGETCTECGHLLSEIRLGQRTTVFCSLCQT). The active-site Proton donor; for delta-elimination activity is Arg-260.

This sequence belongs to the FPG family. As to quaternary structure, monomer. The cofactor is Zn(2+).

The catalysed reaction is Hydrolysis of DNA containing ring-opened 7-methylguanine residues, releasing 2,6-diamino-4-hydroxy-5-(N-methyl)formamidopyrimidine.. It carries out the reaction 2'-deoxyribonucleotide-(2'-deoxyribose 5'-phosphate)-2'-deoxyribonucleotide-DNA = a 3'-end 2'-deoxyribonucleotide-(2,3-dehydro-2,3-deoxyribose 5'-phosphate)-DNA + a 5'-end 5'-phospho-2'-deoxyribonucleoside-DNA + H(+). Involved in base excision repair of DNA damaged by oxidation or by mutagenic agents. Acts as a DNA glycosylase that recognizes and removes damaged bases. Has a preference for oxidized purines, such as 7,8-dihydro-8-oxoguanine (8-oxoG). Has AP (apurinic/apyrimidinic) lyase activity and introduces nicks in the DNA strand. Cleaves the DNA backbone by beta-delta elimination to generate a single-strand break at the site of the removed base with both 3'- and 5'-phosphates. The sequence is that of Formamidopyrimidine-DNA glycosylase from Shewanella amazonensis (strain ATCC BAA-1098 / SB2B).